Reading from the N-terminus, the 306-residue chain is Curved DNA-binding protein (306 aa).

Residues 5–69 (DYYAIMGVKP…QRRAEYDQMW (65 aa)) enclose the J domain.

The protein resides in the cytoplasm. It is found in the nucleoid. In terms of biological role, DNA-binding protein that preferentially recognizes a curved DNA sequence. It is probably a functional analog of DnaJ; displays overlapping activities with DnaJ, but functions under different conditions, probably acting as a molecular chaperone in an adaptive response to environmental stresses other than heat shock. Lacks autonomous chaperone activity; binds native substrates and targets them for recognition by DnaK. Its activity is inhibited by the binding of CbpM. This Escherichia coli O157:H7 protein is Curved DNA-binding protein.